The chain runs to 234 residues: uncharacterized protein (234 aa).

2 consecutive transmembrane segments (helical) span residues 20 to 40 (LILL…FKVI) and 176 to 196 (VMAF…LHFL).

This sequence belongs to the CpsC/CapA family.

Its subcellular location is the cell membrane. This is an uncharacterized protein from Bacillus subtilis (strain 168).